The chain runs to 288 residues: Diaminopimelate epimerase (288 aa).

Substrate contacts are provided by Asn-14 and Asn-67. Cys-76 acts as the Proton donor in catalysis. Substrate is bound by residues 77–78 (GN), Asn-166, Asn-199, and 217–218 (ER). Cys-226 acts as the Proton acceptor in catalysis. Residue 227-228 (GT) coordinates substrate.

Belongs to the diaminopimelate epimerase family. In terms of assembly, homodimer.

The protein resides in the cytoplasm. It carries out the reaction (2S,6S)-2,6-diaminopimelate = meso-2,6-diaminopimelate. The protein operates within amino-acid biosynthesis; L-lysine biosynthesis via DAP pathway; DL-2,6-diaminopimelate from LL-2,6-diaminopimelate: step 1/1. Its function is as follows. Catalyzes the stereoinversion of LL-2,6-diaminopimelate (L,L-DAP) to meso-diaminopimelate (meso-DAP), a precursor of L-lysine and an essential component of the bacterial peptidoglycan. This chain is Diaminopimelate epimerase, found in Bacillus anthracis (strain A0248).